We begin with the raw amino-acid sequence, 422 residues long: 3-phosphoshikimate 1-carboxyvinyltransferase (422 aa).

The 3-phosphoshikimate site is built by Lys-20, Ser-21, and Arg-25. Residue Lys-20 participates in phosphoenolpyruvate binding. Residues Gly-90 and Arg-118 each coordinate phosphoenolpyruvate. The 3-phosphoshikimate site is built by Ser-163, Ser-164, Gln-165, Ser-191, Asp-306, and Lys-333. Phosphoenolpyruvate is bound at residue Gln-165. Asp-306 functions as the Proton acceptor in the catalytic mechanism. Residues Arg-337 and Arg-378 each contribute to the phosphoenolpyruvate site.

This sequence belongs to the EPSP synthase family. As to quaternary structure, monomer.

It is found in the cytoplasm. The enzyme catalyses 3-phosphoshikimate + phosphoenolpyruvate = 5-O-(1-carboxyvinyl)-3-phosphoshikimate + phosphate. It participates in metabolic intermediate biosynthesis; chorismate biosynthesis. Functionally, catalyzes the transfer of the enolpyruvyl moiety of phosphoenolpyruvate (PEP) to the 5-hydroxyl of shikimate-3-phosphate (S3P) to produce enolpyruvyl shikimate-3-phosphate and inorganic phosphate. This is 3-phosphoshikimate 1-carboxyvinyltransferase from Methanocella arvoryzae (strain DSM 22066 / NBRC 105507 / MRE50).